The primary structure comprises 204 residues: Glycerol-3-phosphate acyltransferase (204 aa).

The next 5 membrane-spanning stretches (helical) occupy residues 8 to 28 (ILIF…CYIF), 53 to 73 (VPAA…VVIA), 81 to 101 (FITA…IFFG), 116 to 136 (FGFS…VAII), and 155 to 175 (VIFT…IIIL).

The protein belongs to the PlsY family. Probably interacts with PlsX.

It is found in the cell inner membrane. The enzyme catalyses an acyl phosphate + sn-glycerol 3-phosphate = a 1-acyl-sn-glycero-3-phosphate + phosphate. It functions in the pathway lipid metabolism; phospholipid metabolism. Its function is as follows. Catalyzes the transfer of an acyl group from acyl-phosphate (acyl-PO(4)) to glycerol-3-phosphate (G3P) to form lysophosphatidic acid (LPA). This enzyme utilizes acyl-phosphate as fatty acyl donor, but not acyl-CoA or acyl-ACP. This is Glycerol-3-phosphate acyltransferase from Francisella tularensis subsp. novicida (strain U112).